A 104-amino-acid chain; its full sequence is UPF0235 protein Paes_1868 (104 aa).

Belongs to the UPF0235 family.

The sequence is that of UPF0235 protein Paes_1868 from Prosthecochloris aestuarii (strain DSM 271 / SK 413).